The following is a 327-amino-acid chain: Zinc transport protein ZntB (327 aa).

Over 1–271 (MESFAGKELQ…AMNRRTYTMS (271 aa)) the chain is Cytoplasmic. Residues 272 to 292 (LLAMVFLPTTFLTGLFGVNLG) form a helical membrane-spanning segment. The Periplasmic segment spans residues 293–300 (GIPGGDAP). Residues 301-321 (FGFFTFCLMLVILVGGVAWWL) traverse the membrane as a helical segment. Residues 322–327 (KRSKWL) lie on the Cytoplasmic side of the membrane.

This sequence belongs to the CorA metal ion transporter (MIT) (TC 1.A.35) family.

It is found in the cell inner membrane. It carries out the reaction Zn(2+)(out) + H(+)(out) = Zn(2+)(in) + H(+)(in). In terms of biological role, zinc transporter. Acts as a Zn(2+):proton symporter, which likely mediates zinc ion uptake. In Pectobacterium carotovorum subsp. carotovorum (strain PC1), this protein is Zinc transport protein ZntB.